Reading from the N-terminus, the 260-residue chain is 1-(5-phosphoribosyl)-5-[(5-phosphoribosylamino)methylideneamino] imidazole-4-carboxamide isomerase (260 aa).

Asp8 serves as the catalytic Proton acceptor. Catalysis depends on Asp130, which acts as the Proton donor.

This sequence belongs to the HisA/HisF family.

It is found in the cytoplasm. The catalysed reaction is 1-(5-phospho-beta-D-ribosyl)-5-[(5-phospho-beta-D-ribosylamino)methylideneamino]imidazole-4-carboxamide = 5-[(5-phospho-1-deoxy-D-ribulos-1-ylimino)methylamino]-1-(5-phospho-beta-D-ribosyl)imidazole-4-carboxamide. The protein operates within amino-acid biosynthesis; L-histidine biosynthesis; L-histidine from 5-phospho-alpha-D-ribose 1-diphosphate: step 4/9. The polypeptide is 1-(5-phosphoribosyl)-5-[(5-phosphoribosylamino)methylideneamino] imidazole-4-carboxamide isomerase (Chlorobaculum tepidum (strain ATCC 49652 / DSM 12025 / NBRC 103806 / TLS) (Chlorobium tepidum)).